The following is a 294-amino-acid chain: Probable cobalamin biosynthesis protein CobD (294 aa).

4 helical membrane-spanning segments follow: residues alanine 52 to phenylalanine 72, tyrosine 73 to isoleucine 93, aspartate 145 to tyrosine 165, and isoleucine 268 to valine 288.

The protein belongs to the CobD/CbiB family.

It localises to the cell membrane. The protein operates within cofactor biosynthesis; adenosylcobalamin biosynthesis. Its function is as follows. Converts cobyric acid to cobinamide by the addition of aminopropanol on the F carboxylic group. This chain is Probable cobalamin biosynthesis protein CobD, found in Thermococcus kodakarensis (strain ATCC BAA-918 / JCM 12380 / KOD1) (Pyrococcus kodakaraensis (strain KOD1)).